The following is a 508-amino-acid chain: Maturase K (508 aa).

The protein belongs to the intron maturase 2 family. MatK subfamily.

It is found in the plastid. The protein localises to the chloroplast. Usually encoded in the trnK tRNA gene intron. Probably assists in splicing its own and other chloroplast group II introns. The sequence is that of Maturase K from Verbena rigida (Tuberous vervain).